The following is a 120-amino-acid chain: Ribosome-binding factor A (120 aa).

It belongs to the RbfA family. As to quaternary structure, monomer. Binds 30S ribosomal subunits, but not 50S ribosomal subunits or 70S ribosomes.

Its subcellular location is the cytoplasm. One of several proteins that assist in the late maturation steps of the functional core of the 30S ribosomal subunit. Associates with free 30S ribosomal subunits (but not with 30S subunits that are part of 70S ribosomes or polysomes). Required for efficient processing of 16S rRNA. May interact with the 5'-terminal helix region of 16S rRNA. This chain is Ribosome-binding factor A, found in Rickettsia peacockii (strain Rustic).